The chain runs to 222 residues: Secreted protein D (222 aa).

The first 22 residues, Met-1–Cys-22, serve as a signal peptide directing secretion. N-linked (GlcNAc...) asparagine glycosylation occurs at Asn-25.

The protein belongs to the Sct family.

Its subcellular location is the secreted. In Dictyostelium discoideum (Social amoeba), this protein is Secreted protein D.